An 83-amino-acid polypeptide reads, in one-letter code: RNA-binding protein Hfq (83 aa).

Positions 9-68 (DPYLNILRKERIPVSIFLVNGIKLQGQIESFDQFVILLRNTVSQMVYKHAISTVVPSRNV) constitute a Sm domain.

Belongs to the Hfq family. Homohexamer.

In terms of biological role, RNA chaperone that binds small regulatory RNA (sRNAs) and mRNAs to facilitate mRNA translational regulation in response to envelope stress, environmental stress and changes in metabolite concentrations. Also binds with high specificity to tRNAs. In Chromohalobacter salexigens (strain ATCC BAA-138 / DSM 3043 / CIP 106854 / NCIMB 13768 / 1H11), this protein is RNA-binding protein Hfq.